A 584-amino-acid polypeptide reads, in one-letter code: uncharacterized protein (584 aa).

Positions 353 to 375 (NSEGQTNAETSLNGKGTVGNQWA) are enriched in polar residues. 3 disordered regions span residues 353 to 379 (NSEGQTNAETSLNGKGTVGNQWASPPE), 400 to 426 (LESKFNGTGGGQTDSEKEQIMESVSSH), and 463 to 565 (SVDS…CNSG). A compositionally biased stretch (polar residues) spans 502-511 (KANSPASSRL). Positions 516–535 (DSSHLSKHVNFDKNPDHSEA) are enriched in basic and acidic residues.

This is an uncharacterized protein from Mus musculus (Mouse).